The chain runs to 44 residues: Protein PsbN (44 aa).

Residues 6–26 (FFFTIFLWCLLLSVTGYSVYV) traverse the membrane as a helical segment.

It belongs to the PsbN family.

Its subcellular location is the plastid. The protein resides in the chloroplast thylakoid membrane. May play a role in photosystem I and II biogenesis. This chain is Protein PsbN, found in Oltmannsiellopsis viridis (Marine flagellate).